A 527-amino-acid polypeptide reads, in one-letter code: Tyrosine-protein kinase TXK (527 aa).

The disordered stretch occupies residues 35–79; it reads DEELPEKYTQRRRPWLSQLSNKKQSNTGRVQPSKRKPLPPLPPSE. The span at 51–64 shows a compositional bias: polar residues; it reads SQLSNKKQSNTGRV. The short motif at 68–73 is the Nuclear localization signal element; it reads KRKPLP. Residues 82–142 enclose the SH3 domain; it reads EEKIQVKALY…PSNYVTENKI (61 aa). At Tyr91 the chain carries Phosphotyrosine; by autocatalysis. Residues 150-246 enclose the SH2 domain; the sequence is WYHRNITRNQ…GLMTRLRYPV (97 aa). The Protein kinase domain occupies 271 to 527; sequence LAFIKEIGSG…RAVTEIAETW (257 aa). ATP contacts are provided by residues 277–285 and Lys299; that span reads IGSGQFGVV. The active-site Proton acceptor is the Asp390. Phosphotyrosine; by FYN and autocatalysis is present on Tyr420.

The protein belongs to the protein kinase superfamily. Tyr protein kinase family. TEC subfamily. Interacts with PARP1 and EEF1A1. Interacts with SH2D2A. Interacts with FYN. Post-translationally, phosphorylated at Tyr-420 by FYN. Autophosphorylation at Tyr-91 is critical for the activation of TXK, leading to the up-regulation of IFN-gamma gene transcription. The cysteine string at the N-terminus is palmitoylated and required for the proper subcellular location. Expressed in T-cells and some myeloid cell lines. Expressed in Th1/Th0 cells with IFN-gamma-producing potential.

The protein resides in the cytoplasm. It is found in the nucleus. Its subcellular location is the cell membrane. It carries out the reaction L-tyrosyl-[protein] + ATP = O-phospho-L-tyrosyl-[protein] + ADP + H(+). Its activity is regulated as follows. Activated by phosphorylation by FYN. In terms of biological role, non-receptor tyrosine kinase that plays a redundant role with ITK in regulation of the adaptive immune response. Regulates the development, function and differentiation of conventional T-cells and nonconventional NKT-cells. When antigen presenting cells (APC) activate T-cell receptor (TCR), a series of phosphorylation leads to the recruitment of TXK to the cell membrane, where it is phosphorylated at Tyr-420. Phosphorylation leads to TXK full activation. Also contributes to signaling from many receptors and participates in multiple downstream pathways, including regulation of the actin cytoskeleton. Like ITK, can phosphorylate PLCG1, leading to its localization in lipid rafts and activation, followed by subsequent cleavage of its substrates. In turn, the endoplasmic reticulum releases calcium in the cytoplasm and the nuclear activator of activated T-cells (NFAT) translocates into the nucleus to perform its transcriptional duty. Plays a role in the positive regulation of IFNG transcription in T-helper 1 cells as part of an IFNG promoter-binding complex with PARP1 and EEF1A1. Within the complex, phosphorylates both PARP1 and EEF1A1. Also phosphorylates key sites in LCP2 leading to the up-regulation of Th1 preferred cytokine IL-2. Phosphorylates 'Tyr-201' of CTLA4 which leads to the association of PI-3 kinase with the CTLA4 receptor. This is Tyrosine-protein kinase TXK (TXK) from Homo sapiens (Human).